We begin with the raw amino-acid sequence, 339 residues long: Serine/threonine-protein kinase pdik1l-A (339 aa).

Residues 8–332 (YDLIREVGRG…LELKLIQIAF (325 aa)) form the Protein kinase domain. ATP-binding positions include 14–22 (VGRGSYGVV) and Lys37. The active-site Proton acceptor is the Asp164.

It belongs to the protein kinase superfamily. Ser/Thr protein kinase family.

It is found in the nucleus. It catalyses the reaction L-seryl-[protein] + ATP = O-phospho-L-seryl-[protein] + ADP + H(+). The catalysed reaction is L-threonyl-[protein] + ATP = O-phospho-L-threonyl-[protein] + ADP + H(+). This is Serine/threonine-protein kinase pdik1l-A (pdik1-a) from Xenopus laevis (African clawed frog).